Reading from the N-terminus, the 361-residue chain is Chorismate synthase (361 aa).

Positions 48 and 54 each coordinate NADP(+). FMN is bound by residues 125–127 (RSS), 238–239 (NA), glycine 278, 293–297 (KPTSS), and arginine 319.

The protein belongs to the chorismate synthase family. In terms of assembly, homotetramer. It depends on FMNH2 as a cofactor.

The catalysed reaction is 5-O-(1-carboxyvinyl)-3-phosphoshikimate = chorismate + phosphate. It participates in metabolic intermediate biosynthesis; chorismate biosynthesis; chorismate from D-erythrose 4-phosphate and phosphoenolpyruvate: step 7/7. Functionally, catalyzes the anti-1,4-elimination of the C-3 phosphate and the C-6 proR hydrogen from 5-enolpyruvylshikimate-3-phosphate (EPSP) to yield chorismate, which is the branch point compound that serves as the starting substrate for the three terminal pathways of aromatic amino acid biosynthesis. This reaction introduces a second double bond into the aromatic ring system. This Shigella boydii serotype 18 (strain CDC 3083-94 / BS512) protein is Chorismate synthase.